Here is a 448-residue protein sequence, read N- to C-terminus: Putative RNA-ligase (448 aa).

The protein belongs to the asfivirus M448R family.

It is found in the virion. The sequence is that of Putative RNA-ligase from Ornithodoros (relapsing fever ticks).